The following is an 80-amino-acid chain: Progonadoliberin-1 (80 aa).

The N-terminal stretch at methionine 1–alanine 21 is a signal peptide. Glutamine 22 bears the Pyrrolidone carboxylic acid mark. Glycine amide is present on glycine 31.

The protein belongs to the GnRH family.

It localises to the secreted. Functionally, stimulates the secretion of gonadotropins. The polypeptide is Progonadoliberin-1 (gnrh1) (Clarias gariepinus (North African catfish)).